The sequence spans 94 residues: Co-chaperonin GroES (94 aa).

This sequence belongs to the GroES chaperonin family. Heptamer of 7 subunits arranged in a ring. Interacts with the chaperonin GroEL.

It localises to the cytoplasm. Its function is as follows. Together with the chaperonin GroEL, plays an essential role in assisting protein folding. The GroEL-GroES system forms a nano-cage that allows encapsulation of the non-native substrate proteins and provides a physical environment optimized to promote and accelerate protein folding. GroES binds to the apical surface of the GroEL ring, thereby capping the opening of the GroEL channel. The protein is Co-chaperonin GroES of Clostridium kluyveri (strain NBRC 12016).